A 350-amino-acid polypeptide reads, in one-letter code: Derriere protein (350 aa).

Residues 1-16 form the signal peptide; sequence MLSLACFFSFLLMVKS. Positions 17 to 236 are excised as a propeptide; sequence SPLTFQERML…SSCKTPRAKR (220 aa). N-linked (GlcNAc...) asparagine glycosylation is found at Asn-171 and Asn-202. 3 disulfide bridges follow: Cys-249–Cys-315, Cys-278–Cys-347, and Cys-282–Cys-349.

This sequence belongs to the TGF-beta family. As to quaternary structure, homodimer; disulfide-linked. Also forms heterodimers with other TGF-beta family members including nodal2/nr-2 and bmp4.

Its subcellular location is the secreted. Required for posterior mesoderm formation during embryogenesis. Acts indirectly to suppress head formation by altering mesodermal patterning. Also involved in the establishment of left-right axis asymmetry, acting upstream of nodal/nr-1. Can exert long-range effects in the embryo. This is Derriere protein from Xenopus tropicalis (Western clawed frog).